We begin with the raw amino-acid sequence, 21 residues long: Pseudogermin (21 aa).

The protein belongs to the germin family. As to quaternary structure, homotetramer.

It localises to the secreted. The protein resides in the extracellular space. It is found in the apoplast. The protein localises to the cell wall. May subsume the role of germin at the low water potentials during embryogenesis. This is Pseudogermin from Triticum aestivum (Wheat).